Here is a 424-residue protein sequence, read N- to C-terminus: Serine--tRNA ligase (424 aa).

Residue 230–232 participates in L-serine binding; it reads TAE. 261–263 contacts ATP; the sequence is RSE. E284 contributes to the L-serine binding site. 348–351 provides a ligand contact to ATP; sequence EISS. S384 is an L-serine binding site.

The protein belongs to the class-II aminoacyl-tRNA synthetase family. Type-1 seryl-tRNA synthetase subfamily. In terms of assembly, homodimer. The tRNA molecule binds across the dimer.

It localises to the cytoplasm. It catalyses the reaction tRNA(Ser) + L-serine + ATP = L-seryl-tRNA(Ser) + AMP + diphosphate + H(+). The catalysed reaction is tRNA(Sec) + L-serine + ATP = L-seryl-tRNA(Sec) + AMP + diphosphate + H(+). It participates in aminoacyl-tRNA biosynthesis; selenocysteinyl-tRNA(Sec) biosynthesis; L-seryl-tRNA(Sec) from L-serine and tRNA(Sec): step 1/1. In terms of biological role, catalyzes the attachment of serine to tRNA(Ser). Is also able to aminoacylate tRNA(Sec) with serine, to form the misacylated tRNA L-seryl-tRNA(Sec), which will be further converted into selenocysteinyl-tRNA(Sec). The polypeptide is Serine--tRNA ligase (Streptococcus pneumoniae (strain JJA)).